The primary structure comprises 344 residues: Phenylalanine--tRNA ligase alpha subunit (344 aa).

Position 256 (Glu256) interacts with Mg(2+).

This sequence belongs to the class-II aminoacyl-tRNA synthetase family. Phe-tRNA synthetase alpha subunit type 1 subfamily. As to quaternary structure, tetramer of two alpha and two beta subunits. Mg(2+) serves as cofactor.

The protein localises to the cytoplasm. It catalyses the reaction tRNA(Phe) + L-phenylalanine + ATP = L-phenylalanyl-tRNA(Phe) + AMP + diphosphate + H(+). This chain is Phenylalanine--tRNA ligase alpha subunit, found in Bacillus anthracis (strain CDC 684 / NRRL 3495).